A 203-amino-acid chain; its full sequence is Glutathione-specific gamma-glutamylcyclotransferase (203 aa).

Residue 12-17 coordinates substrate; sequence VFGYGS. The Proton acceptor role is filled by Glu-105.

The protein belongs to the gamma-glutamylcyclotransferase family. ChaC subfamily.

Its subcellular location is the cytoplasm. The protein localises to the nucleus. It catalyses the reaction glutathione = L-cysteinylglycine + 5-oxo-L-proline. In terms of biological role, gamma-glutamylcyclotransferase acting specifically on glutathione, but not on other gamma-glutamyl peptides. Allows utilization of gluthathione through subsequent cleavage of the Cys-Gly dipeptide by Cys-Gly metallodipeptidase dug1. The polypeptide is Glutathione-specific gamma-glutamylcyclotransferase (Schizosaccharomyces pombe (strain 972 / ATCC 24843) (Fission yeast)).